A 376-amino-acid polypeptide reads, in one-letter code: Pyrimidine monooxygenase RutA (376 aa).

FMN contacts are provided by residues 61–62 (IK), asparagine 127, glutamate 136, 152–153 (RY), and serine 202.

The protein belongs to the NtaA/SnaA/DszA monooxygenase family. RutA subfamily.

It catalyses the reaction uracil + FMNH2 + NADH + O2 = (Z)-3-ureidoacrylate + FMN + NAD(+) + H2O + H(+). The catalysed reaction is thymine + FMNH2 + NADH + O2 = (Z)-2-methylureidoacrylate + FMN + NAD(+) + H2O + H(+). Functionally, catalyzes the pyrimidine ring opening between N-3 and C-4 by an unusual flavin hydroperoxide-catalyzed mechanism, adding oxygen atoms in the process to yield ureidoacrylate peracid, that immediately reacts with FMN forming ureidoacrylate and FMN-N(5)-oxide. The FMN-N(5)-oxide reacts spontaneously with NADH to produce FMN. Requires the flavin reductase RutF to regenerate FMN in vivo. In Methylorubrum populi (strain ATCC BAA-705 / NCIMB 13946 / BJ001) (Methylobacterium populi), this protein is Pyrimidine monooxygenase RutA.